A 490-amino-acid chain; its full sequence is MKLLHPAFQSCLLLTLLGLWRTTPEAHASSPGAPAISAASFLQDLIHRYGEGDSLTLQQLKALLNHLDVGVGRGNVTQHVQGHRNLSTCFSSGDLFAAHNFSEQSRIGSSELQEFCPTILQQLDSRACTSENQENEENEQTEEGWPSAVEVWGYGLLCVTVISLCSLLGASVVPFMKKTFYKRLLLYFIALAIGTLYSNALFQLIPEAFGFNPLEDYYVSKSAVVFGGFYLFFFTEKILKILLKQKNEHHHGHSHYASETLPSKKDQEEGVMEKLQNGDLDHMIPQHCNSELDGKAPVVDEKVIVGSLSVQDLQASQSACYWLKGVRYSDIGTLAWMITLSDGLHNFIDGLAIGASFTVSVFQGISTSVAILCEEFPHELGDFVILLNAGMSIQQALFFNFLSACCCYLGLAFGILAGSHFSANWIFALAGGMFLYISLADMFPEMNEVCQEDERKGSILIPFVIQNLGLLTGFTIMVVLTMYSGQIQIG.

The N-terminal stretch at 1–28 is a signal peptide; that stretch reads MKLLHPAFQSCLLLTLLGLWRTTPEAHA. Residues 29–155 are Extracellular-facing; that stretch reads SSPGAPAISA…PSAVEVWGYG (127 aa). N-linked (GlcNAc...) asparagine glycosylation is found at Asn75, Asn85, and Asn100. Residues 156 to 176 traverse the membrane as a helical segment; it reads LLCVTVISLCSLLGASVVPFM. Residues 177-184 are Cytoplasmic-facing; it reads KKTFYKRL. The chain crosses the membrane as a helical span at residues 185-205; that stretch reads LLYFIALAIGTLYSNALFQLI. At 206–222 the chain is on the extracellular side; sequence PEAFGFNPLEDYYVSKS. Residues 223–243 form a helical membrane-spanning segment; that stretch reads AVVFGGFYLFFFTEKILKILL. Over 244–395 the chain is Cytoplasmic; sequence KQKNEHHHGH…LLNAGMSIQQ (152 aa). The short motif at 249–256 is the HHHGHXHX-motif element; sequence HHHGHSHY. Residues 374–379 carry the XEXPHE-motif motif; the sequence is EEFPHE. Residues 396–416 traverse the membrane as a helical segment; sequence ALFFNFLSACCCYLGLAFGIL. Topologically, residues 417 to 422 are extracellular; that stretch reads AGSHFS. The helical transmembrane segment at 423–443 threads the bilayer; sequence ANWIFALAGGMFLYISLADMF. At 444–458 the chain is on the cytoplasmic side; the sequence is PEMNEVCQEDERKGS. The chain crosses the membrane as a helical span at residues 459–479; sequence ILIPFVIQNLGLLTGFTIMVV. Residues 480-490 lie on the Extracellular side of the membrane; that stretch reads LTMYSGQIQIG.

The protein belongs to the ZIP transporter (TC 2.A.5) family. In terms of assembly, homotrimer. In terms of processing, ubiquitinated. Ubiquitination occurs upon iron depletion. The ubiquitinated form undergoes proteasomal degradation. N-glycosylated. N-glycosylation at Asn-100 is required for iron-regulated extraction of the transporter from membranes and subsequent proteasomal degradation.

The protein localises to the cell membrane. It localises to the apical cell membrane. Its subcellular location is the basolateral cell membrane. It is found in the early endosome membrane. The protein resides in the late endosome membrane. The protein localises to the lysosome membrane. It catalyses the reaction Zn(2+)(out) + 2 hydrogencarbonate(out) = Zn(2+)(in) + 2 hydrogencarbonate(in). The catalysed reaction is Mn(2+)(out) + 2 hydrogencarbonate(out) = Mn(2+)(in) + 2 hydrogencarbonate(in). The enzyme catalyses Fe(2+)(out) + 2 hydrogencarbonate(out) = Fe(2+)(in) + 2 hydrogencarbonate(in). It carries out the reaction Cd(2+)(out) + 2 hydrogencarbonate(out) = Cd(2+)(in) + 2 hydrogencarbonate(in). Electroneutral transporter of the plasma membrane mediating the cellular uptake of the divalent metal cations zinc, manganese and iron that are important for tissue homeostasis, metabolism, development and immunity. Functions as an energy-dependent symporter, transporting through the membranes an electroneutral complex composed of a divalent metal cation and two bicarbonate anions. Beside these endogenous cellular substrates, can also import cadmium a non-essential metal which is cytotoxic and carcinogenic. Controls the cellular uptake by the intestinal epithelium of systemic zinc, which is in turn required to maintain tight junctions and the intestinal permeability. Modifies the activity of zinc-dependent phosphodiesterases, thereby indirectly regulating G protein-coupled receptor signaling pathways important for gluconeogenesis and chondrocyte differentiation. Regulates insulin receptor signaling, glucose uptake, glycogen synthesis and gluconeogenesis in hepatocytes through the zinc-dependent intracellular catabolism of insulin. Through zinc cellular uptake also plays a role in the adaptation of cells to endoplasmic reticulum stress. Major manganese transporter of the basolateral membrane of intestinal epithelial cells, it plays a central role in manganese systemic homeostasis through intestinal manganese uptake. Also involved in manganese extracellular uptake by cells of the blood-brain barrier. May also play a role in manganese and zinc homeostasis participating in their elimination from the blood through the hepatobiliary excretion. Also functions in the extracellular uptake of free iron. May also function intracellularly and mediate the transport from endosomes to cytosol of iron endocytosed by transferrin. Plays a role in innate immunity by regulating the expression of cytokines by activated macrophages. The polypeptide is Metal cation symporter ZIP14 (Pongo abelii (Sumatran orangutan)).